Consider the following 1488-residue polypeptide: Chromosome partition protein MukB (1488 aa).

34–41 is an ATP binding site; sequence GGNGAGKS. 3 coiled-coil regions span residues 326-418, 444-472, and 509-602; these read LEAD…QYNQ, LDTFQAKEQEATEKLLSLEQKMSVAQTAH, and RHLA…QRAP. Residues 666–783 form a flexible hinge region; the sequence is PGGAEDQRLN…SLPIFGRAAR (118 aa). Coiled coils occupy residues 835–923, 977–1116, and 1209–1265; these read EAEI…AKLE, EMLS…AKAG, and VEAI…LQSV. A disordered region spans residues 1049 to 1074; that stretch reads ADSGAEERARQRRDELHAQLSNNRSR. Residues 1051–1065 show a composition bias toward basic and acidic residues; it reads SGAEERARQRRDELH.

Belongs to the SMC family. MukB subfamily. In terms of assembly, homodimerization via its hinge domain. Binds to DNA via its C-terminal region. Interacts, and probably forms a ternary complex, with MukE and MukF via its C-terminal region. The complex formation is stimulated by calcium or magnesium. Interacts with tubulin-related protein FtsZ.

The protein localises to the cytoplasm. It localises to the nucleoid. In terms of biological role, plays a central role in chromosome condensation, segregation and cell cycle progression. Functions as a homodimer, which is essential for chromosome partition. Involved in negative DNA supercoiling in vivo, and by this means organize and compact chromosomes. May achieve or facilitate chromosome segregation by condensation DNA from both sides of a centrally located replisome during cell division. This chain is Chromosome partition protein MukB, found in Salmonella typhi.